The sequence spans 118 residues: Large ribosomal subunit protein bL19 (118 aa).

This sequence belongs to the bacterial ribosomal protein bL19 family.

Functionally, this protein is located at the 30S-50S ribosomal subunit interface and may play a role in the structure and function of the aminoacyl-tRNA binding site. The polypeptide is Large ribosomal subunit protein bL19 (Levilactobacillus brevis (strain ATCC 367 / BCRC 12310 / CIP 105137 / JCM 1170 / LMG 11437 / NCIMB 947 / NCTC 947) (Lactobacillus brevis)).